Here is a 318-residue protein sequence, read N- to C-terminus: Thymidylate synthase (318 aa).

Residues Arg-25 and 180 to 181 (RR) each bind dUMP. Residue Cys-200 is the Nucleophile of the active site. DUMP-binding positions include 220–223 (RSGD), Asn-231, and 261–263 (HIY). Asp-223 provides a ligand contact to (6R)-5,10-methylene-5,6,7,8-tetrahydrofolate. Residue Ala-317 participates in (6R)-5,10-methylene-5,6,7,8-tetrahydrofolate binding.

This sequence belongs to the thymidylate synthase family. Bacterial-type ThyA subfamily. As to quaternary structure, homodimer.

It is found in the cytoplasm. It catalyses the reaction dUMP + (6R)-5,10-methylene-5,6,7,8-tetrahydrofolate = 7,8-dihydrofolate + dTMP. It functions in the pathway pyrimidine metabolism; dTTP biosynthesis. Catalyzes the reductive methylation of 2'-deoxyuridine-5'-monophosphate (dUMP) to 2'-deoxythymidine-5'-monophosphate (dTMP) while utilizing 5,10-methylenetetrahydrofolate (mTHF) as the methyl donor and reductant in the reaction, yielding dihydrofolate (DHF) as a by-product. This enzymatic reaction provides an intracellular de novo source of dTMP, an essential precursor for DNA biosynthesis. This chain is Thymidylate synthase, found in Bacillus cereus (strain ZK / E33L).